The following is a 427-amino-acid chain: Ribitol transporter (427 aa).

At 1–7 (MSVNNKQ) the chain is on the cytoplasmic side. A helical transmembrane segment spans residues 8-28 (WYGLPLNLIWGYVAIAVFMTG). At 29–51 (DGFELAFLSHYIKALGFTPAQAS) the chain is on the extracellular side. The chain crosses the membrane as a helical span at residues 52 to 72 (FAFTLYGLAAALSAWVSGVVA). The Cytoplasmic portion of the chain corresponds to 73–79 (EIITPRK). The helical transmembrane segment at 80–100 (AMLIGFVLWCVFHVLFLVFGL) threads the bilayer. The Extracellular portion of the chain corresponds to 101 to 107 (GRANYAL). A helical membrane pass occupies residues 108–128 (ILLFYGIRGLAYPLFLYSFIV). Over 129–141 (AIIHNVRSDSSSS) the chain is Cytoplasmic. The helical transmembrane segment at 142 to 162 (ALGWFWAVYSVGIGVFGSYIP) threads the bilayer. Over 163 to 171 (SFTIPHIGE) the chain is Extracellular. The helical transmembrane segment at 172-192 (MGTLWLALLFCATGGIIALVS) threads the bilayer. The Cytoplasmic segment spans residues 193–238 (MRHTETPRHMQNLTTREKFAELGRAATLLYTNRSILFSSIVRIINT). A helical membrane pass occupies residues 239–259 (LSLFGFAVIMPMMFVDELGFT). Residues 260–263 (TSEW) lie on the Extracellular side of the membrane. A helical membrane pass occupies residues 264 to 284 (LQVWAAFFFTTIFSNVFWGIV). The Cytoplasmic portion of the chain corresponds to 285 to 295 (AEKMGWMKVIR). The chain crosses the membrane as a helical span at residues 296-316 (WFGCIGMALSSLAFYYLPQHF). The Extracellular portion of the chain corresponds to 317-323 (GHNFAMA). A helical membrane pass occupies residues 324–344 (LVPAIALGIFVAAFVPMAAVF). Residues 345-360 (PALEPNHKGAAISVYN) lie on the Cytoplasmic side of the membrane. The chain crosses the membrane as a helical span at residues 361–381 (LSAGLSNFLAPAIAVVLLPYF). Residues 382-383 (ST) are Extracellular-facing. A helical membrane pass occupies residues 384-404 (IGVVIAYTALYILAFFLCPLI). The Cytoplasmic portion of the chain corresponds to 405–427 (RVEQPGFTSDQHAKPFTANAAES).

The protein belongs to the major facilitator superfamily. Sugar transporter (TC 2.A.1.1) family. CsbX subfamily.

It is found in the cell membrane. The chain is Ribitol transporter (rbtT) from Klebsiella pneumoniae.